The sequence spans 60 residues: Large ribosomal subunit protein uL30 (60 aa).

This sequence belongs to the universal ribosomal protein uL30 family. As to quaternary structure, part of the 50S ribosomal subunit.

This Dehalococcoides mccartyi (strain ATCC BAA-2100 / JCM 16839 / KCTC 5957 / BAV1) protein is Large ribosomal subunit protein uL30.